The sequence spans 416 residues: Phosphoglycerate kinase (416 aa).

(2R)-3-phosphoglycerate is bound by residues V23, D24, F25, N26, Q38, R39, S62, H63, G65, R66, L121, R122, H168, and R169. G212 contacts ADP. Residue G212 participates in CDP binding. Residues A213 and K214 each coordinate AMP. Position 213 (A213) interacts with ATP. A213 contributes to the Mg(2+) binding site. A216 and D217 together coordinate Mg(2+). D217 provides a ligand contact to CDP. K218 lines the AMP pocket. Position 218 (K218) interacts with ATP. G236 contributes to the ADP binding site. Residue G236 participates in CDP binding. Positions 237 and 311 each coordinate AMP. ATP-binding residues include G237 and G311. CDP is bound by residues G336 and F341. F341 provides a ligand contact to ADP. E342 is an AMP binding site. Residues E342, D373, and T374 each coordinate ATP. D373 contacts Mg(2+).

This sequence belongs to the phosphoglycerate kinase family. In terms of assembly, monomer. Mg(2+) is required as a cofactor.

The protein localises to the cytoplasm. It localises to the mitochondrion. It carries out the reaction (2R)-3-phosphoglycerate + ATP = (2R)-3-phospho-glyceroyl phosphate + ADP. The protein operates within carbohydrate degradation; glycolysis; pyruvate from D-glyceraldehyde 3-phosphate: step 2/5. In terms of biological role, catalyzes one of the two ATP producing reactions in the glycolytic pathway via the reversible conversion of 1,3-diphosphoglycerate to 3-phosphoglycerate. Both L- and D- forms of purine and pyrimidine nucleotides can be used as substrates, but the activity is much lower on pyrimidines. Negatively regulates the biosynthesis of acetyl-CoA from pyruvate in the mitochondrion. This Kluyveromyces lactis (strain ATCC 8585 / CBS 2359 / DSM 70799 / NBRC 1267 / NRRL Y-1140 / WM37) (Yeast) protein is Phosphoglycerate kinase (PGK).